The following is a 279-amino-acid chain: NAD-dependent protein deacylase (279 aa).

Residues 20–272 (RERLRQRIFF…PEFVEKLLKG (253 aa)) enclose the Deacetylase sirtuin-type domain. 48-67 (GAGISAESGIRTFRAADGLW) contributes to the NAD(+) binding site. Substrate contacts are provided by Y92 and R95. 129–132 (QNID) contributes to the NAD(+) binding site. The active-site Proton acceptor is the H147. Residues C155 and C174 each coordinate Zn(2+). Residues 214 to 216 (GTS), 240 to 242 (NLE), and A258 each bind NAD(+).

This sequence belongs to the sirtuin family. Class III subfamily. In terms of assembly, forms a 1:1 complex with acetyl-CoA synthetase (Acs). The cofactor is Zn(2+).

The protein localises to the cytoplasm. The enzyme catalyses N(6)-acetyl-L-lysyl-[protein] + NAD(+) + H2O = 2''-O-acetyl-ADP-D-ribose + nicotinamide + L-lysyl-[protein]. It catalyses the reaction N(6)-succinyl-L-lysyl-[protein] + NAD(+) + H2O = 2''-O-succinyl-ADP-D-ribose + nicotinamide + L-lysyl-[protein]. The catalysed reaction is N(6)-(2-hydroxyisobutanoyl)-L-lysyl-[protein] + NAD(+) + H2O = 2''-O-(2-hydroxyisobutanoyl)-ADP-D-ribose + nicotinamide + L-lysyl-[protein]. Deacetylation is inhibited by nicotinamide. Functionally, NAD-dependent lysine deacetylase that specifically removes acetyl groups on target proteins. Also acts as a protein-lysine deacylase by mediating protein desuccinylation and de-2-hydroxyisobutyrylation. Modulates the activities of several proteins which are inactive in their acylated form. Activates the enzyme acetyl-CoA synthetase (acs) by deacetylating 'Lys-609' in the inactive, acetylated form of the enzyme. May also modulate the activity of other propionyl-adenosine monophosphate (AMP)-forming enzymes. In Escherichia coli (strain K12), this protein is NAD-dependent protein deacylase.